The chain runs to 562 residues: Arginine--tRNA ligase (562 aa).

The 'HIGH' region signature appears at 129 to 139; it reads ANPTGPLHVGH.

Belongs to the class-I aminoacyl-tRNA synthetase family. Monomer.

It localises to the cytoplasm. The enzyme catalyses tRNA(Arg) + L-arginine + ATP = L-arginyl-tRNA(Arg) + AMP + diphosphate. In Xanthomonas oryzae pv. oryzae (strain MAFF 311018), this protein is Arginine--tRNA ligase.